The following is a 291-amino-acid chain: Protease HtpX homolog (291 aa).

2 consecutive transmembrane segments (helical) span residues 4–24 (IVLF…SARL) and 38–58 (MGML…ISLM). Histidine 144 lines the Zn(2+) pocket. The active site involves glutamate 145. Position 148 (histidine 148) interacts with Zn(2+). A run of 2 helical transmembrane segments spans residues 152-172 (GDMV…IFLA) and 199-219 (VSSI…VMFF). Position 224 (glutamate 224) interacts with Zn(2+).

The protein belongs to the peptidase M48B family. Zn(2+) serves as cofactor.

It localises to the cell inner membrane. This chain is Protease HtpX homolog, found in Prosthecochloris aestuarii (strain DSM 271 / SK 413).